The following is a 509-amino-acid chain: Maturase K (509 aa).

This sequence belongs to the intron maturase 2 family. MatK subfamily.

The protein localises to the plastid. It is found in the chloroplast. Functionally, usually encoded in the trnK tRNA gene intron. Probably assists in splicing its own and other chloroplast group II introns. The protein is Maturase K of Clematis florida (Asian virgin's bower).